The sequence spans 298 residues: uncharacterized protein (298 aa).

The ABC transporter domain occupies 2 to 229 (LTIDHVTKTF…FGKKNVTIHS (228 aa)). 34 to 41 (GANGAGKT) lines the ATP pocket.

It belongs to the ABC transporter superfamily.

It is found in the cell membrane. This is an uncharacterized protein from Bacillus subtilis (strain 168).